Reading from the N-terminus, the 378-residue chain is Stimulator of interferon genes protein (378 aa).

Residues 1 to 17 (MPYSNLHPAIPRPRGHR) lie on the Cytoplasmic side of the membrane. Positions 1–189 (MPYSNLHPAI…MFNQLHNNML (189 aa)) are mediates interaction with ZDHHC1 and ZDHHC11. A helical membrane pass occupies residues 18–34 (SKYVALIFLVASLMILW). K19 participates in a covalent cross-link: Glycyl lysine isopeptide (Lys-Gly) (interchain with G-Cter in ubiquitin). The Lumenal portion of the chain corresponds to 35–44 (VAKDPPNHTL). The helical transmembrane segment at 45-69 (KYLALHLASHELGLLLKNLCCLAEE) threads the bilayer. Residues 70–91 (LCHVQSRYQGSYWKAVRACLGC) are Cytoplasmic-facing. 2 S-palmitoyl cysteine lipidation sites follow: C88 and C91. The chain crosses the membrane as a helical span at residues 92–106 (PIHCMAMILLSSYFY). Over 107–115 (FLQNTADIY) the chain is Lumenal. The helical transmembrane segment at 116-133 (LSWMFGLLVLYKSLSMLL) threads the bilayer. Residues 134-378 (GLQSLTPAEV…QPLPLRTDLI (245 aa)) lie on the Cytoplasmic side of the membrane. Residue K150 forms a Glycyl lysine isopeptide (Lys-Gly) (interchain with G-Cter in ubiquitin) linkage. A cyclic dinucleotide-binding domain (CBD) region spans residues 152-339 (LNVAHGLAWS…RHIRQEEKEE (188 aa)). A 3',3'-c-di-GMP-binding site is contributed by G165. Residue Y166 coordinates 2',3'-cUAMP. Y166 is a 3',3'-cGAMP binding site. K235 is covalently cross-linked (Glycyl lysine isopeptide (Lys-Gly) (interchain with G-Cter in ubiquitin)). R237 contacts 2',3'-cUAMP. R237 provides a ligand contact to 3',3'-cGAMP. R237 serves as a coordination point for 2',3'-cGAMP. 3',3'-c-di-GMP is bound by residues 237–240 (RVYS) and T262. S240 is modified (phosphoserine). T262 is a binding site for 2',3'-cUAMP. T262 is a binding site for 2',3'-cGAMP. Residue K337 forms a Glycyl lysine isopeptide (Lys-Gly) (interchain with G-Cter in SUMO) linkage. Positions 339–378 (EVTMNAPMTSVAPPPSVLSQEPRLLISGMDQPLPLRTDLI) are C-terminal tail (CTT). S354 is subject to Phosphoserine; by MAP3K7. Phosphoserine; by TBK1 is present on residues S357 and S365. The pLxIS motif motif lies at 362–365 (LLIS).

The protein belongs to the STING family. Homodimer; forms a homodimer in absence of cyclic nucleotide (c-di-GMP or cGAMP); 'Lys-63'-linked ubiquitination at Lys-150 is required for homodimerization. Homotetramer; in presence of cyclic nucleotide (c-di-GMP or cGAMP), forms tetramers and higher-order oligomers through side-by-side packing. Interacts (when phosphorylated) with IRF3; following activation and phosphorylation on the pLxIS motif by TBK1, recruits IRF3. Interacts with RIGI, MAVS and SSR2. Interacts with RNF5 and TRIM56. Interacts with TBK1; when homodimer, leading to subsequent production of IFN-beta. Interacts with IFIT1 and IFIT2. Interacts with TRIM29; this interaction induces STING1 ubiquitination and subsequent degradation. Associates with the MHC-II complex. Interacts with STEEP1; interaction takes place upon cGAMP-activation and STING1 phosphorylation by MAP3K7/TAK1 and promotes STING1 translocation to COPII vesicles. Interacts with SEC24A, SEC24B and SEC24C; promoting translocation to COPII vesicles. Interacts (when ubiquitinated) with SQSTM1; leading to relocalization to autophagosomes. Interacts with SURF4. Interacts with HNRNPA2B1. Interacts with ZDHHC1; ZDHHC1 constitutively interacts with STING1 and in presence of DNA viruses activates it by promoting its cGAMP-induced oligomerization and the recruitment of downstream signaling components. Interacts with ZDHHC11; in presence of DNA viruses promotes the recruitment of IRF3 to STING1. Interacts with TOMM70. Interacts with IFI204. Interacts with TAB1; promoting recruitment of TAB1 to the endoplasmic reticulum membrane and subsequent activation of MAP3K7/TAK1. Interacts (via transmembrane domain) with TMEM203. Interacts with DDX41. In terms of processing, phosphorylation by TBK1 leads to activation and production of IFN-beta. Following cyclic nucleotide (c-di-GMP or cGAMP)-binding, activation and translocation from the endoplasmic reticulum, STING1 is phosphorylated by TBK1 at Ser-365 in the pLxIS motif. The phosphorylated pLxIS motif constitutes an IRF3-binding motif, leading to recruitment of the transcription factor IRF3 to induce type-I interferons and other cytokines. The phosphorylated pLxIS motif facilitates SENP2 recruitment during late phase of viral infection. Phosphorylated on tyrosine residues upon MHC-II aggregation. Dephosphorylation by PPP6C leads to inactivation and decreased production of IFN-beta. Phosphorylation at Ser-357 is also required to activate IRF3. Phosphorylation at Ser-354 by MAP3K7/TAK1 facilitates its interaction with STEEP1, promoting STING1 translocation to COPII vesicles. Ubiquitinated. Ubiquitinated via 'Lys-63'-linked ubiquitin chains in response to double-stranded DNA treatment, leading to relocalization to autophagosomes and subsequent degradation; this process is dependent on SQSTM1. 'Lys-63'-linked ubiquitination mediated by TRIM56 at Lys-150 promotes homodimerization and recruitment of the antiviral kinase TBK1 and subsequent production of IFN-beta. 'Lys-48'-linked polyubiquitination at Lys-150 occurring after viral infection is mediated by RNF5 and leads to proteasomal degradation. 'Lys-11'-linked polyubiquitination at Lys-150 by RNF26 leads to stabilize STING1: it protects STING1 from RNF5-mediated 'Lys-48'-linked polyubiquitination. 'Lys-33'-linked and 'Lys-48'-linked deubiquitinated by USP20; leading to its stabilization and promotion of innate antiviral response. 'Lys-48'-linked deubiquitinated by USP44; leading to its stabilization and promotion of innate antiviral response. Deubiquitinated by USP13; leading to inhibition of innate antiviral response. 'Lys-63'-linked deubiquitinated by USP49; leading to inhibition of the subsequent recruitment of TBK1 to the signaling complex. 'Lys-63'-linked ubiquitination mediated by RNF39 promotes the activation of the cGAS-STING pathway. MARCHF5-mediated ubiquitination prevents the oxidation-induced polymer formation. Post-translationally, sumoylated at Lys-337 by TRIM38 during the early phase of viral infection, promoting its stability by preventing its relocalization to autophagosomes and subsequent degradation. Desumoylated by SENP2 during the late phase of viral infection. In terms of processing, palmitoylation takes place in the Golgi apparatus and creates a platform for the recruitment of TBK1. In terms of tissue distribution, present in spleen and thymus tissue. Also present in dendritic cells (at protein level).

It is found in the endoplasmic reticulum membrane. The protein localises to the cytoplasm. Its subcellular location is the perinuclear region. The protein resides in the endoplasmic reticulum-Golgi intermediate compartment membrane. It localises to the golgi apparatus membrane. It is found in the cytoplasmic vesicle. The protein localises to the autophagosome membrane. Its subcellular location is the mitochondrion outer membrane. The protein resides in the cell membrane. It localises to the lysosome membrane. It catalyses the reaction H(+)(in) = H(+)(out). Its activity is regulated as follows. Activated by anticancer drug 5,6-dimethylxanthenone 4-acetic acid (DMXAA). Specifically inhibited by nitrofuran derivatives C-178 and C-176, which covalently bind Cys-91 and prevent palmitoylation and subsequent activation od STING1. In terms of biological role, facilitator of innate immune signaling that acts as a sensor of cytosolic DNA from bacteria and viruses and promotes the production of type I interferon (IFN-alpha and IFN-beta). Innate immune response is triggered in response to non-CpG double-stranded DNA from viruses and bacteria delivered to the cytoplasm. Acts by binding cyclic dinucleotides: recognizes and binds cyclic di-GMP (c-di-GMP), a second messenger produced by bacteria, cyclic UMP-AMP (2',3'-cUAMP), and cyclic GMP-AMP (cGAMP), a messenger produced by CGAS in response to DNA virus in the cytosol. Upon binding to c-di-GMP, cUAMP or cGAMP, STING1 oligomerizes, translocates from the endoplasmic reticulum and is phosphorylated by TBK1 on the pLxIS motif, leading to recruitment and subsequent activation of the transcription factor IRF3 to induce expression of type I interferon and exert a potent anti-viral state. Exhibits 2',3' phosphodiester linkage-specific ligand recognition: can bind both 2'-3' linked cGAMP (2'-3'-cGAMP) and 3'-3' linked cGAMP but is preferentially activated by 2'-3' linked cGAMP. The preference for 2'-3'-cGAMP, compared to other linkage isomers is probably due to the ligand itself, whichs adopts an organized free-ligand conformation that resembles the STING1-bound conformation and pays low energy costs in changing into the active conformation. In addition to promote the production of type I interferons, plays a direct role in autophagy. Following cGAMP-binding, STING1 buds from the endoplasmic reticulum into COPII vesicles, which then form the endoplasmic reticulum-Golgi intermediate compartment (ERGIC). The ERGIC serves as the membrane source for WIPI2 recruitment and LC3 lipidation, leading to formation of autophagosomes that target cytosolic DNA or DNA viruses for degradation by the lysosome. Promotes autophagy by acting as a proton channel that directs proton efflux from the Golgi to facilitate MAP1LC3B/LC3B lipidation. The autophagy- and interferon-inducing activities can be uncoupled and autophagy induction is independent of TBK1 phosphorylation. Autophagy is also triggered upon infection by bacteria: following c-di-GMP-binding, which is produced by live Gram-positive bacteria, promotes reticulophagy. May be involved in translocon function, the translocon possibly being able to influence the induction of type I interferons. May be involved in transduction of apoptotic signals via its association with the major histocompatibility complex class II (MHC-II). This Mus musculus (Mouse) protein is Stimulator of interferon genes protein.